A 336-amino-acid chain; its full sequence is Dihydroorotate dehydrogenase (quinone) (336 aa).

FMN is bound by residues 62 to 66 (AGLDK) and Thr-86. Substrate is bound at residue Lys-66. 111–115 (NRMGF) is a substrate binding site. FMN is bound by residues Asn-139 and Asn-172. Asn-172 serves as a coordination point for substrate. Residue Ser-175 is the Nucleophile of the active site. Residue Asn-177 coordinates substrate. FMN is bound by residues Lys-217 and Thr-245. 246-247 (NT) contributes to the substrate binding site. Residues Gly-268, Gly-297, and 318–319 (YS) contribute to the FMN site.

It belongs to the dihydroorotate dehydrogenase family. Type 2 subfamily. In terms of assembly, monomer. FMN is required as a cofactor.

The protein localises to the cell membrane. The catalysed reaction is (S)-dihydroorotate + a quinone = orotate + a quinol. It participates in pyrimidine metabolism; UMP biosynthesis via de novo pathway; orotate from (S)-dihydroorotate (quinone route): step 1/1. Catalyzes the conversion of dihydroorotate to orotate with quinone as electron acceptor. This is Dihydroorotate dehydrogenase (quinone) from Escherichia coli (strain SE11).